We begin with the raw amino-acid sequence, 271 residues long: MLKIGIIGCGFIGGQICRAIDSGEIDAELYALCDSSESKAFGLAKSLNTCKPAYMKIEELISSVDLVVESASQNAVRFIVPQALKAGCSVMVLSVGALADKELRETLFGLAKKHNCKLYFPSGAVVGIDGINSAHAAGISSVTLTTRKPPSGLMGAPYVVEHGIELEKLEKETILFEGTASEAVKAFPANVNVAATISLAGIGFERTMVRVIADPSLSRNIHEINVEGEFGKFCTKVENLPSPENPKTSYLAALSAISTLKKILNPVQIGT.

Positions 124 and 192 each coordinate NAD(+). The active site involves His222.

Belongs to the L-aspartate dehydrogenase family.

The catalysed reaction is L-aspartate + NADP(+) + H2O = oxaloacetate + NH4(+) + NADPH + H(+). It carries out the reaction L-aspartate + NAD(+) + H2O = oxaloacetate + NH4(+) + NADH + H(+). It participates in cofactor biosynthesis; NAD(+) biosynthesis; iminoaspartate from L-aspartate (dehydrogenase route): step 1/1. Functionally, specifically catalyzes the NAD or NADP-dependent dehydrogenation of L-aspartate to iminoaspartate. This chain is L-aspartate dehydrogenase, found in Methanosarcina mazei (strain ATCC BAA-159 / DSM 3647 / Goe1 / Go1 / JCM 11833 / OCM 88) (Methanosarcina frisia).